We begin with the raw amino-acid sequence, 615 residues long: Dihydroxy-acid dehydratase (615 aa).

Asp-81 provides a ligand contact to Mg(2+). Cys-122 is a binding site for [2Fe-2S] cluster. Asp-123 and Lys-124 together coordinate Mg(2+). Lys-124 is subject to N6-carboxylysine. [2Fe-2S] cluster is bound at residue Cys-193. Glu-489 provides a ligand contact to Mg(2+). The active-site Proton acceptor is Ser-515.

Belongs to the IlvD/Edd family. In terms of assembly, homodimer. [2Fe-2S] cluster serves as cofactor. Mg(2+) is required as a cofactor.

It catalyses the reaction (2R)-2,3-dihydroxy-3-methylbutanoate = 3-methyl-2-oxobutanoate + H2O. It carries out the reaction (2R,3R)-2,3-dihydroxy-3-methylpentanoate = (S)-3-methyl-2-oxopentanoate + H2O. It participates in amino-acid biosynthesis; L-isoleucine biosynthesis; L-isoleucine from 2-oxobutanoate: step 3/4. The protein operates within amino-acid biosynthesis; L-valine biosynthesis; L-valine from pyruvate: step 3/4. In terms of biological role, functions in the biosynthesis of branched-chain amino acids. Catalyzes the dehydration of (2R,3R)-2,3-dihydroxy-3-methylpentanoate (2,3-dihydroxy-3-methylvalerate) into 2-oxo-3-methylpentanoate (2-oxo-3-methylvalerate) and of (2R)-2,3-dihydroxy-3-methylbutanoate (2,3-dihydroxyisovalerate) into 2-oxo-3-methylbutanoate (2-oxoisovalerate), the penultimate precursor to L-isoleucine and L-valine, respectively. In Pseudomonas syringae pv. syringae (strain B728a), this protein is Dihydroxy-acid dehydratase.